Reading from the N-terminus, the 69-residue chain is Magnetosome protein MamI (69 aa).

Residues 1-2 (MP) lie on the Cytoplasmic side of the membrane. A helical transmembrane segment spans residues 3 to 23 (SVIFGLLALAIGLLGLTAWWW). The Lumenal portion of the chain corresponds to 24–31 (SVTEFLRG). The helical transmembrane segment at 32–52 (AVPVALIIFGLVALAAGVQSV) threads the bilayer. The Cytoplasmic segment spans residues 53–69 (RVPPAGKRANSDPNIDG).

It belongs to the magnetosome MamI protein family.

It is found in the magnetosome membrane. Functionally, may be involved in an early stage of magnetosome nucleation. Not essential for formation of magnetosome membrane vesicles, it is probably functionally redundant with other proteins. May bind magnetite. One of 7 genes (mamLQBIEMO) able to induce magnetosome membrane biogenesis; coexpression of mamLQRBIEMO in a deletion of the 17 gene mamAB operon restores magnetosome vesicle formation but not magnetite biosynthesis. This Magnetospirillum gryphiswaldense (strain DSM 6361 / JCM 21280 / NBRC 15271 / MSR-1) protein is Magnetosome protein MamI.